Consider the following 492-residue polypeptide: Protein nucleotidyltransferase YdiU (492 aa).

ATP is bound by residues Gly-91, Gly-93, Arg-94, Lys-114, Asp-126, Gly-127, Arg-177, and Arg-184. Asp-253 (proton acceptor) is an active-site residue. Residues Asn-254 and Asp-263 each contribute to the Mg(2+) site. An ATP-binding site is contributed by Asp-263.

It belongs to the SELO family. The cofactor is Mg(2+). It depends on Mn(2+) as a cofactor.

The catalysed reaction is L-seryl-[protein] + ATP = 3-O-(5'-adenylyl)-L-seryl-[protein] + diphosphate. It carries out the reaction L-threonyl-[protein] + ATP = 3-O-(5'-adenylyl)-L-threonyl-[protein] + diphosphate. The enzyme catalyses L-tyrosyl-[protein] + ATP = O-(5'-adenylyl)-L-tyrosyl-[protein] + diphosphate. It catalyses the reaction L-histidyl-[protein] + UTP = N(tele)-(5'-uridylyl)-L-histidyl-[protein] + diphosphate. The catalysed reaction is L-seryl-[protein] + UTP = O-(5'-uridylyl)-L-seryl-[protein] + diphosphate. It carries out the reaction L-tyrosyl-[protein] + UTP = O-(5'-uridylyl)-L-tyrosyl-[protein] + diphosphate. Its function is as follows. Nucleotidyltransferase involved in the post-translational modification of proteins. It can catalyze the addition of adenosine monophosphate (AMP) or uridine monophosphate (UMP) to a protein, resulting in modifications known as AMPylation and UMPylation. This chain is Protein nucleotidyltransferase YdiU, found in Maridesulfovibrio salexigens (strain ATCC 14822 / DSM 2638 / NCIMB 8403 / VKM B-1763) (Desulfovibrio salexigens).